Reading from the N-terminus, the 128-residue chain is Sulfurtransferase TusD (128 aa).

Cysteine 78 functions as the Cysteine persulfide intermediate in the catalytic mechanism.

Belongs to the DsrE/TusD family. Heterohexamer, formed by a dimer of trimers. The hexameric TusBCD complex contains 2 copies each of TusB, TusC and TusD. The TusBCD complex interacts with TusE.

The protein localises to the cytoplasm. Part of a sulfur-relay system required for 2-thiolation of 5-methylaminomethyl-2-thiouridine (mnm(5)s(2)U) at tRNA wobble positions. Accepts sulfur from TusA and transfers it in turn to TusE. This chain is Sulfurtransferase TusD, found in Escherichia coli O127:H6 (strain E2348/69 / EPEC).